Reading from the N-terminus, the 202-residue chain is Ribonuclease HII (202 aa).

An RNase H type-2 domain is found at Met-1 to Gly-195. 3 residues coordinate a divalent metal cation: Asp-7, Glu-8, and Asp-103.

The protein belongs to the RNase HII family. The cofactor is Mn(2+). Mg(2+) is required as a cofactor.

Its subcellular location is the cytoplasm. It catalyses the reaction Endonucleolytic cleavage to 5'-phosphomonoester.. In terms of biological role, endonuclease that specifically degrades the RNA of RNA-DNA hybrids. The polypeptide is Ribonuclease HII (Synechococcus sp. (strain RCC307)).